The following is a 239-amino-acid chain: ATP-dependent dethiobiotin synthetase BioD (239 aa).

22-27 (GIGKTV) provides a ligand contact to ATP. Mg(2+) is bound at residue Thr26. Residue Lys47 is part of the active site. Substrate is bound at residue Thr51. ATP is bound by residues Asp59, 124–127 (EGVG), and 184–185 (NR). Asp59 and Glu124 together coordinate Mg(2+).

This sequence belongs to the dethiobiotin synthetase family. In terms of assembly, homodimer. The cofactor is Mg(2+).

Its subcellular location is the cytoplasm. The enzyme catalyses (7R,8S)-7,8-diammoniononanoate + CO2 + ATP = (4R,5S)-dethiobiotin + ADP + phosphate + 3 H(+). Its pathway is cofactor biosynthesis; biotin biosynthesis; biotin from 7,8-diaminononanoate: step 1/2. Its function is as follows. Catalyzes a mechanistically unusual reaction, the ATP-dependent insertion of CO2 between the N7 and N8 nitrogen atoms of 7,8-diaminopelargonic acid (DAPA, also called 7,8-diammoniononanoate) to form a ureido ring. The protein is ATP-dependent dethiobiotin synthetase BioD of Chlorobaculum tepidum (strain ATCC 49652 / DSM 12025 / NBRC 103806 / TLS) (Chlorobium tepidum).